The following is a 383-amino-acid chain: Chaperone protein DnaJ (383 aa).

The J domain occupies 5 to 70; that stretch reads DYYKTLGVTQ…KKRTAYDQYG (66 aa). A CR-type zinc finger spans residues 137-215; it reads GTIKEIKIPT…CHGNGRIEIS (79 aa). Positions 150, 153, 167, 170, 189, 192, 203, and 206 each coordinate Zn(2+). CXXCXGXG motif repeat units follow at residues 150–157, 167–174, 189–196, and 203–210; these read CPTCYGYG, CPTCRGNG, CPQCHGEG, and CRRCHGNG.

The protein belongs to the DnaJ family. In terms of assembly, homodimer. Requires Zn(2+) as cofactor.

It localises to the cytoplasm. In terms of biological role, participates actively in the response to hyperosmotic and heat shock by preventing the aggregation of stress-denatured proteins and by disaggregating proteins, also in an autonomous, DnaK-independent fashion. Unfolded proteins bind initially to DnaJ; upon interaction with the DnaJ-bound protein, DnaK hydrolyzes its bound ATP, resulting in the formation of a stable complex. GrpE releases ADP from DnaK; ATP binding to DnaK triggers the release of the substrate protein, thus completing the reaction cycle. Several rounds of ATP-dependent interactions between DnaJ, DnaK and GrpE are required for fully efficient folding. Also involved, together with DnaK and GrpE, in the DNA replication of plasmids through activation of initiation proteins. The chain is Chaperone protein DnaJ from Buchnera aphidicola subsp. Baizongia pistaciae (strain Bp).